A 217-amino-acid polypeptide reads, in one-letter code: Protein-L-isoaspartate O-methyltransferase (217 aa).

The active site involves Ser-65.

It belongs to the methyltransferase superfamily. L-isoaspartyl/D-aspartyl protein methyltransferase family.

It is found in the cytoplasm. It catalyses the reaction [protein]-L-isoaspartate + S-adenosyl-L-methionine = [protein]-L-isoaspartate alpha-methyl ester + S-adenosyl-L-homocysteine. Functionally, catalyzes the methyl esterification of L-isoaspartyl residues in peptides and proteins that result from spontaneous decomposition of normal L-aspartyl and L-asparaginyl residues. It plays a role in the repair and/or degradation of damaged proteins. This is Protein-L-isoaspartate O-methyltransferase from Chlorobium limicola (strain DSM 245 / NBRC 103803 / 6330).